The following is a 242-amino-acid chain: HTH domain-truncated transcriptional regulator QseD (242 aa).

It belongs to the LysR transcriptional regulatory family.

In terms of biological role, represses EHEC virulence expression. Down-regulates expression of LEE (locus of enterocyte effacement) and iraD genes, and alters AE (attaching and effacing) lesion formation. May regulate transcription through interactions with another HTH DNA-binding protein. The protein is HTH domain-truncated transcriptional regulator QseD (qseD) of Escherichia coli O157:H7.